A 431-amino-acid chain; its full sequence is Adenylosuccinate synthetase (431 aa).

Residues 13–19 (GDEGKGK) and 41–43 (GHT) each bind GTP. Catalysis depends on aspartate 14, which acts as the Proton acceptor. Residues aspartate 14 and glycine 41 each contribute to the Mg(2+) site. IMP-binding positions include 14 to 17 (DEGK), 39 to 42 (NAGH), threonine 130, arginine 144, glutamine 225, threonine 240, and arginine 304. Histidine 42 (proton donor) is an active-site residue. 300–306 (ATTGRKR) provides a ligand contact to substrate. GTP is bound by residues arginine 306, 332–334 (KLD), and 415–417 (STG).

It belongs to the adenylosuccinate synthetase family. In terms of assembly, homodimer. The cofactor is Mg(2+).

It localises to the cytoplasm. The catalysed reaction is IMP + L-aspartate + GTP = N(6)-(1,2-dicarboxyethyl)-AMP + GDP + phosphate + 2 H(+). It participates in purine metabolism; AMP biosynthesis via de novo pathway; AMP from IMP: step 1/2. Plays an important role in the de novo pathway of purine nucleotide biosynthesis. Catalyzes the first committed step in the biosynthesis of AMP from IMP. In Shewanella frigidimarina (strain NCIMB 400), this protein is Adenylosuccinate synthetase.